A 509-amino-acid polypeptide reads, in one-letter code: 2-isopropylmalate synthase (509 aa).

The Pyruvate carboxyltransferase domain occupies 5 to 267 (IQIFDTTLRD…QTALNLEETK (263 aa)). Residues D14, H202, H204, and N238 each coordinate Mn(2+). The regulatory domain stretch occupies residues 391–509 (KLETLQLQYV…AAENVEKVGN (119 aa)).

It belongs to the alpha-IPM synthase/homocitrate synthase family. LeuA type 1 subfamily. As to quaternary structure, homodimer. Requires Mn(2+) as cofactor.

The protein resides in the cytoplasm. It carries out the reaction 3-methyl-2-oxobutanoate + acetyl-CoA + H2O = (2S)-2-isopropylmalate + CoA + H(+). It functions in the pathway amino-acid biosynthesis; L-leucine biosynthesis; L-leucine from 3-methyl-2-oxobutanoate: step 1/4. Catalyzes the condensation of the acetyl group of acetyl-CoA with 3-methyl-2-oxobutanoate (2-ketoisovalerate) to form 3-carboxy-3-hydroxy-4-methylpentanoate (2-isopropylmalate). This Staphylococcus aureus (strain USA300) protein is 2-isopropylmalate synthase.